A 597-amino-acid chain; its full sequence is Phosphoinositide phosphatase SAC7 (597 aa).

In terms of domain architecture, SAC spans 130–458 (LSVAEKTTGL…GDEISIQYSG (329 aa)). The short motif at 393-404 (RSNCIDCLDRTN) is the Phosphatase catalytic core element. 2 helical membrane-spanning segments follow: residues 528-548 (AVAN…FATM) and 559-579 (HKHL…AALV).

In terms of tissue distribution, ubiquitous.

Its subcellular location is the endoplasmic reticulum membrane. The protein localises to the cytoplasmic vesicle membrane. Functionally, phosphoinositide phosphatase that preferentially hydrolyzes PtdIns(4)P. Regulates the accumulation of PtdIns(4)P on membrane compartments at the tips of growing root hairs leading to proper root hair development. The protein is Phosphoinositide phosphatase SAC7 (SAC7) of Arabidopsis thaliana (Mouse-ear cress).